A 781-amino-acid polypeptide reads, in one-letter code: Molybdenum cofactor sulfurase (781 aa).

Position 246 is an N6-(pyridoxal phosphate)lysine (Lys246). The active site involves Cys413. Positions 619 to 781 (GDAVAQWLSE…MTCGDVVIVE (163 aa)) constitute an MOSC domain. At Ser734 the chain carries Phosphoserine.

This sequence belongs to the class-V pyridoxal-phosphate-dependent aminotransferase family. MOCOS subfamily. It depends on pyridoxal 5'-phosphate as a cofactor.

It carries out the reaction Mo-molybdopterin + L-cysteine + AH2 = thio-Mo-molybdopterin + L-alanine + A + H2O. It functions in the pathway cofactor biosynthesis; molybdopterin biosynthesis. Its function is as follows. Sulfurates the molybdenum cofactor. Sulfation of molybdenum is essential for xanthine dehydrogenase (XDH) and aldehyde oxidase (ADO) enzymes in which molybdenum cofactor is liganded by 1 oxygen and 1 sulfur atom in active form. In Drosophila erecta (Fruit fly), this protein is Molybdenum cofactor sulfurase.